A 359-amino-acid chain; its full sequence is Nicotinate-nucleotide--dimethylbenzimidazole phosphoribosyltransferase (359 aa).

Glu318 functions as the Proton acceptor in the catalytic mechanism.

This sequence belongs to the CobT family. Homodimer.

The enzyme catalyses 5,6-dimethylbenzimidazole + nicotinate beta-D-ribonucleotide = alpha-ribazole 5'-phosphate + nicotinate + H(+). It participates in nucleoside biosynthesis; alpha-ribazole biosynthesis; alpha-ribazole from 5,6-dimethylbenzimidazole: step 1/2. Its function is as follows. Catalyzes the synthesis of alpha-ribazole-5'-phosphate from nicotinate mononucleotide (NAMN) and 5,6-dimethylbenzimidazole (DMB). The protein is Nicotinate-nucleotide--dimethylbenzimidazole phosphoribosyltransferase of Shigella flexneri serotype 5b (strain 8401).